A 397-amino-acid chain; its full sequence is MAERVELLERRVRELERELELARGGRASARARIETMSPEVTDSNPYSRLMALKRMGIVKDYEKIRTFTVAIVGVGGVGSVTAEMLTRCGIGKLLLFDYDKVELANMNRLFFQPHQAGLSKVQAAEHTLRNINPDVQFEVHNYNITTLDNFEHFMDRISNGALEEGKPVDLVLSCVDNFEARMAINTACNELGQIWMESGVSENAVSGHIQLIIPGESACFACAPPLVVAANIDEKTLKREGVCAASLPTTMGVVAGILVQNVLKYLLNFGTVSYYLGYNAMQDFFPTMAMKPNPQCSDQNCRKQQENYKIKEAAQPKQEEIHQEEEIVHEDNDWGIELVSETTEDELKAASGPVPDLPVGITVAYTIPNKEENLTAEETVAESEESLEDLMAKMRNL.

Glycine 76, aspartate 97, lysine 120, asparagine 143, and asparagine 177 together coordinate ATP. Residues cysteine 219 and cysteine 222 each contribute to the Zn(2+) site. The active-site Glycyl thioester intermediate is cysteine 243. Positions 296 and 301 each coordinate Zn(2+). Residues 327–339 (IVHEDNDWGIELV) carry the UFM1-interacting sequence (UIS) motif. A linker region spans residues 340-370 (SETTEDELKAASGPVPDLPVGITVAYTIPNK). Residues 382 to 397 (ESEESLEDLMAKMRNL) carry the UFC1-binding sequence (UFC) motif.

It belongs to the ubiquitin-activating E1 family. UBA5 subfamily. In terms of assembly, homodimer; homodimerization is required for UFM1 activation. Interacts (via UIS motif) with UFM1; binds UFM1 via a trans-binding mechanism in which UFM1 interacts with distinct sites in both subunits of the UBA5 homodimer. Interacts (via C-terminus) with UFC1.

The protein resides in the cytoplasm. It is found in the nucleus. The protein localises to the endoplasmic reticulum membrane. Its subcellular location is the golgi apparatus. Functionally, E1-like enzyme which specifically catalyzes the first step in ufmylation. Activates UFM1 by first adenylating its C-terminal glycine residue with ATP, and thereafter linking this residue to the side chain of a cysteine residue in E1, yielding a UFM1-E1 thioester and free AMP. Activates UFM1 via a trans-binding mechanism, in which UFM1 interacts with distinct sites in both subunits of the UBA5 homodimer. Trans-binding also promotes stabilization of the UBA5 homodimer, and enhances ATP-binding. Transfer of UFM1 from UBA5 to the E2-like enzyme UFC1 also takes place using a trans mechanism. Ufmylation plays a key role in various processes, such as ribosome recycling, response to DNA damage, interferon response or reticulophagy (also called ER-phagy). The sequence is that of Ubiquitin-like modifier-activating enzyme 5 from Gallus gallus (Chicken).